A 151-amino-acid polypeptide reads, in one-letter code: D-aminoacyl-tRNA deacylase (151 aa).

The Gly-cisPro motif, important for rejection of L-amino acids signature appears at Gly-137–Pro-138.

This sequence belongs to the DTD family. In terms of assembly, homodimer.

It is found in the cytoplasm. It carries out the reaction glycyl-tRNA(Ala) + H2O = tRNA(Ala) + glycine + H(+). It catalyses the reaction a D-aminoacyl-tRNA + H2O = a tRNA + a D-alpha-amino acid + H(+). In terms of biological role, an aminoacyl-tRNA editing enzyme that deacylates mischarged D-aminoacyl-tRNAs. Also deacylates mischarged glycyl-tRNA(Ala), protecting cells against glycine mischarging by AlaRS. Acts via tRNA-based rather than protein-based catalysis; rejects L-amino acids rather than detecting D-amino acids in the active site. By recycling D-aminoacyl-tRNA to D-amino acids and free tRNA molecules, this enzyme counteracts the toxicity associated with the formation of D-aminoacyl-tRNA entities in vivo and helps enforce protein L-homochirality. This Geobacter metallireducens (strain ATCC 53774 / DSM 7210 / GS-15) protein is D-aminoacyl-tRNA deacylase.